A 336-amino-acid polypeptide reads, in one-letter code: Foldase protein PrsA (336 aa).

The signal sequence occupies residues methionine 1–alanine 22. A lipid anchor (N-palmitoyl cysteine) is attached at cysteine 23. The S-diacylglycerol cysteine moiety is linked to residue cysteine 23. A PpiC domain is found at proline 194–serine 286.

Belongs to the PrsA family.

The protein localises to the cell membrane. It catalyses the reaction [protein]-peptidylproline (omega=180) = [protein]-peptidylproline (omega=0). In terms of biological role, plays a major role in protein secretion by helping the post-translocational extracellular folding of several secreted proteins. This is Foldase protein PrsA from Clostridium botulinum (strain Okra / Type B1).